We begin with the raw amino-acid sequence, 576 residues long: Trehalase 2 (576 aa).

Belongs to the glycosyl hydrolase 15 family.

It carries out the reaction alpha,alpha-trehalose + H2O = alpha-D-glucose + beta-D-glucose. The protein operates within glycan degradation; trehalose degradation; D-glucose from alpha,alpha-trehalose: step 1/1. Catalyzes the hydrolysis of alpha,alpha-trehalose into two molecules of D-glucose. This Sulfolobus acidocaldarius (strain ATCC 33909 / DSM 639 / JCM 8929 / NBRC 15157 / NCIMB 11770) protein is Trehalase 2 (treH2).